Here is a 418-residue protein sequence, read N- to C-terminus: Probable serine/threonine-protein kinase DDB_G0280461 (418 aa).

The Protein kinase domain occupies 14-271; sequence KIEENEFSKG…IVQTLDQLAI (258 aa). ATP is bound by residues 20–28 and lysine 41; that span reads FSKGSFAKV. Aspartate 139 acts as the Proton acceptor in catalysis. Disordered stretches follow at residues 327 to 356 and 377 to 418; these read NNNNNNNNNNNNKNNINNNNNNNNNNNNNN and SVNS…CLIN. The segment covering 377 to 402 has biased composition (low complexity); the sequence is SVNSSFSNSSLGSNGSNSSGTSTSSG. Residues 403–418 show a composition bias toward basic residues; it reads GKKRSQKRKSWKCLIN.

The protein belongs to the protein kinase superfamily. TKL Ser/Thr protein kinase family.

The enzyme catalyses L-seryl-[protein] + ATP = O-phospho-L-seryl-[protein] + ADP + H(+). It catalyses the reaction L-threonyl-[protein] + ATP = O-phospho-L-threonyl-[protein] + ADP + H(+). The protein is Probable serine/threonine-protein kinase DDB_G0280461 of Dictyostelium discoideum (Social amoeba).